The following is a 316-amino-acid chain: Acetyl-coenzyme A carboxylase carboxyl transferase subunit alpha (316 aa).

In terms of domain architecture, CoA carboxyltransferase C-terminal spans 39–293 (RLQDKSHALT…RQTLLAQLES (255 aa)).

Belongs to the AccA family. As to quaternary structure, acetyl-CoA carboxylase is a heterohexamer composed of biotin carboxyl carrier protein (AccB), biotin carboxylase (AccC) and two subunits each of ACCase subunit alpha (AccA) and ACCase subunit beta (AccD).

The protein resides in the cytoplasm. It catalyses the reaction N(6)-carboxybiotinyl-L-lysyl-[protein] + acetyl-CoA = N(6)-biotinyl-L-lysyl-[protein] + malonyl-CoA. The protein operates within lipid metabolism; malonyl-CoA biosynthesis; malonyl-CoA from acetyl-CoA: step 1/1. Its function is as follows. Component of the acetyl coenzyme A carboxylase (ACC) complex. First, biotin carboxylase catalyzes the carboxylation of biotin on its carrier protein (BCCP) and then the CO(2) group is transferred by the carboxyltransferase to acetyl-CoA to form malonyl-CoA. The protein is Acetyl-coenzyme A carboxylase carboxyl transferase subunit alpha of Azotobacter vinelandii (strain DJ / ATCC BAA-1303).